The chain runs to 211 residues: Protein GrpE (211 aa).

Basic and acidic residues predominate over residues 1 to 10; the sequence is MTDDTKKPGP. Disordered regions lie at residues 1–37 and 187–211; these read MTDD…PDPV and AKGG…EKDA. Residues 27–36 show a composition bias toward acidic residues; the sequence is EQAETAEPDP. Residues 201-211 are compositionally biased toward polar residues; it reads PGTSSLNEKDA.

This sequence belongs to the GrpE family. In terms of assembly, homodimer.

Its subcellular location is the cytoplasm. In terms of biological role, participates actively in the response to hyperosmotic and heat shock by preventing the aggregation of stress-denatured proteins, in association with DnaK and GrpE. It is the nucleotide exchange factor for DnaK and may function as a thermosensor. Unfolded proteins bind initially to DnaJ; upon interaction with the DnaJ-bound protein, DnaK hydrolyzes its bound ATP, resulting in the formation of a stable complex. GrpE releases ADP from DnaK; ATP binding to DnaK triggers the release of the substrate protein, thus completing the reaction cycle. Several rounds of ATP-dependent interactions between DnaJ, DnaK and GrpE are required for fully efficient folding. The sequence is that of Protein GrpE from Agrobacterium fabrum (strain C58 / ATCC 33970) (Agrobacterium tumefaciens (strain C58)).